We begin with the raw amino-acid sequence, 779 residues long: Protein WEAK CHLOROPLAST MOVEMENT UNDER BLUE LIGHT-like 1 (779 aa).

The tract at residues 1 to 119 (MEDLKTTDAL…NAVSPRPLYS (119 aa)) is disordered. A compositionally biased stretch (polar residues) spans 79–88 (DSPTTPSFVS). Serine 139 is subject to Phosphoserine. Coiled coils occupy residues 182-503 (RMKV…KQRE), 532-587 (KETR…ESRL), and 657-715 (AVSE…KWRE). Residues 650–661 (ANARVAAAVSEV) are compositionally biased toward low complexity. 2 disordered regions span residues 650–674 (ANARVAAAVSEVGEAKETEKRSLEK) and 694–759 (EKAE…NPVK). Composition is skewed to basic and acidic residues over residues 662–674 (GEAKETEKRSLEK) and 694–718 (EKAEKAKEGKLGVEQELRKWREVSE). Residues 741 to 753 (TSVSNETETNPIP) are compositionally biased toward polar residues.

It belongs to the WEB family.

This chain is Protein WEAK CHLOROPLAST MOVEMENT UNDER BLUE LIGHT-like 1 (WEL1), found in Arabidopsis thaliana (Mouse-ear cress).